Consider the following 681-residue polypeptide: MGSPMHRVSLGDHWSWQVHPDIDSERHSPSFSVERLTNILDGGLPNTVLRRKVESIIQSDPVFNLKKLYFMTREELYEDAIQKRFHLEKLAWSLGWSEDGPERIYANRVLDGNVNLSLHGVAMNAIRSLGSDEQIAKWGQLCKNFQIITTYAQTELGHGTYLQGLETEATYDEARQELVIHSPTMTSTKWWPGDLGWSVTHAVVLAQLTCLGVRHGMHAFIVPIRSLEDHTPLPGITVGDIGPKMGLEHIDNGFLQLNHVRVPRENMLSRFAEVLPDGTYQRLGTPQSNYLGMLVTRVQLLCKGILPSLQKACIIATRYSVIRHQSRLRPSDPEAKILEYQTQQQKLLPQLAVSYAFHFTATSLSEFFHSSYSAILKRDFSLLPELHALSTGMKATFADFCAQGAEICRRACGGHGYSKLSGLPTLVARATASCTYEGENTVLYLQVARFLMKSYLQAQASPGATPQKPLPQSVMYIATQRPARCSAQTAADFRCPDVYTTAWAYVSTRLIRDAAHRTQTLMKSGVDQHDAWNQTTVIHLQAAKAHCYFITVKNFKEAVEKLDKEPEIQRVLQRLCDLYALHGVLTNSGDFLHDGFLSGAQVDMAREAFLDLLPLIRKDAILLTDAFDFSDHCLNSALGCYDGHVYERLFEWAQKYPANTQENPAYKKYIRPLMLGWRHKM.

A phosphoserine mark is found at Ser-3 and Ser-9. 6 positions are modified to N6-succinyllysine: Lys-66, Lys-137, Lys-303, Lys-453, Lys-561, and Lys-667. The Microbody targeting signal signature appears at 679–681; it reads HKM.

This sequence belongs to the acyl-CoA oxidase family. Homodimer. Requires FAD as cofactor. As to expression, most abundant in liver. Also expressed in kidney. Not present in any other tissues tested.

The protein localises to the peroxisome. It catalyses the reaction (25R)-3alpha,7alpha,12alpha-trihydroxy-5beta-cholestan-26-oyl-CoA + A + H2O = (24R,25R)-3alpha,7alpha,12alpha,24-tetrahydroxy-5beta-cholestan-26-oyl-CoA + AH2. The enzyme catalyses (25S)-3alpha,7alpha,12alpha-trihydroxy-5beta-cholestan-26-oyl-CoA + O2 = (24E)-3alpha,7alpha,12alpha-trihydroxy-5beta-cholest-24-en-26-oyl-CoA + H2O2. Functionally, oxidizes the CoA esters of the bile acid intermediates di- and tri-hydroxycoprostanic acids. Capable of oxidizing short as well as long chain 2-methyl branched fatty acids. The polypeptide is Peroxisomal acyl-coenzyme A oxidase 2 (Rattus norvegicus (Rat)).